Here is a 202-residue protein sequence, read N- to C-terminus: ATP-dependent Clp protease proteolytic subunit 2 (202 aa).

The Nucleophile role is filled by serine 99. The active site involves histidine 124.

The protein belongs to the peptidase S14 family. In terms of assembly, fourteen ClpP subunits assemble into 2 heptameric rings which stack back to back to give a disk-like structure with a central cavity, resembling the structure of eukaryotic proteasomes.

It localises to the cytoplasm. It catalyses the reaction Hydrolysis of proteins to small peptides in the presence of ATP and magnesium. alpha-casein is the usual test substrate. In the absence of ATP, only oligopeptides shorter than five residues are hydrolyzed (such as succinyl-Leu-Tyr-|-NHMec, and Leu-Tyr-Leu-|-Tyr-Trp, in which cleavage of the -Tyr-|-Leu- and -Tyr-|-Trp bonds also occurs).. Functionally, cleaves peptides in various proteins in a process that requires ATP hydrolysis. Has a chymotrypsin-like activity. Plays a major role in the degradation of misfolded proteins. The sequence is that of ATP-dependent Clp protease proteolytic subunit 2 from Desulfitobacterium hafniense (strain Y51).